Here is a 292-residue protein sequence, read N- to C-terminus: 33 kDa chaperonin (292 aa).

2 cysteine pairs are disulfide-bonded: C230/C232 and C263/C266.

This sequence belongs to the HSP33 family. Under oxidizing conditions two disulfide bonds are formed involving the reactive cysteines. Under reducing conditions zinc is bound to the reactive cysteines and the protein is inactive.

It is found in the cytoplasm. Functionally, redox regulated molecular chaperone. Protects both thermally unfolding and oxidatively damaged proteins from irreversible aggregation. Plays an important role in the bacterial defense system toward oxidative stress. In Escherichia coli O7:K1 (strain IAI39 / ExPEC), this protein is 33 kDa chaperonin.